Here is a 534-residue protein sequence, read N- to C-terminus: CTP synthase (534 aa).

The tract at residues methionine 1–leucine 267 is amidoligase domain. Serine 13 lines the CTP pocket. UTP is bound at residue serine 13. Serine 14–isoleucine 19 provides a ligand contact to ATP. Tyrosine 54 is an L-glutamine binding site. Aspartate 71 serves as a coordination point for ATP. 2 residues coordinate Mg(2+): aspartate 71 and glutamate 141. CTP contacts are provided by residues aspartate 148–glutamate 150, lysine 188–glutamine 193, and lysine 224. Residues lysine 188 to glutamine 193 and lysine 224 contribute to the UTP site. Arginine 240 to valine 242 contributes to the ATP binding site. Residues lysine 292–asparagine 534 enclose the Glutamine amidotransferase type-1 domain. Glycine 354 is an L-glutamine binding site. Catalysis depends on cysteine 381, which acts as the Nucleophile; for glutamine hydrolysis. Residues leucine 382 to glutamine 385, glutamate 405, and arginine 463 each bind L-glutamine. Catalysis depends on residues histidine 508 and glutamate 510.

It belongs to the CTP synthase family. Homotetramer.

The catalysed reaction is UTP + L-glutamine + ATP + H2O = CTP + L-glutamate + ADP + phosphate + 2 H(+). It carries out the reaction L-glutamine + H2O = L-glutamate + NH4(+). It catalyses the reaction UTP + NH4(+) + ATP = CTP + ADP + phosphate + 2 H(+). It participates in pyrimidine metabolism; CTP biosynthesis via de novo pathway; CTP from UDP: step 2/2. Allosterically activated by GTP, when glutamine is the substrate; GTP has no effect on the reaction when ammonia is the substrate. The allosteric effector GTP functions by stabilizing the protein conformation that binds the tetrahedral intermediate(s) formed during glutamine hydrolysis. Inhibited by the product CTP, via allosteric rather than competitive inhibition. In terms of biological role, catalyzes the ATP-dependent amination of UTP to CTP with either L-glutamine or ammonia as the source of nitrogen. Regulates intracellular CTP levels through interactions with the four ribonucleotide triphosphates. This is CTP synthase from Streptococcus pyogenes serotype M4 (strain MGAS10750).